Here is a 250-residue protein sequence, read N- to C-terminus: MNLEALPKYYSPKSPKLSDDAPATGTGCLTITDVMAAQGMVQSKAPLGLALFLAKVGVQDPQFAIEGLLNYAMALDNPTLNKLSEEIRLQIIPYLVSFAFADYSRSAASKARCEHCSGTGFYNVLREVVKHYRRGESVIKEEWVKELCQHCHGKGEASTACRGCKGKGIVLDEKRTRFHGVPVYKICGRCNGNRFSRLPTTLARRHVQKLVPDLTDYQWYKGYADVIGKLVTKCWQEEAYAEAQLRKVTR.

Belongs to the phage antitermination Q type 2 family.

Functionally, positively regulate expression of some phage genes. Bacterial host RNA polymerase modified by antitermination proteins transcribes through termination sites that otherwise prevent expression of the regulated genes. This Escherichia coli (strain K12) protein is Prophage antitermination protein Q homolog QuuQ (quuQ).